We begin with the raw amino-acid sequence, 549 residues long: Arginine--tRNA ligase (549 aa).

The 'HIGH' region signature appears at 113–123; sequence ANPDGPLHIGH.

Belongs to the class-I aminoacyl-tRNA synthetase family.

The protein resides in the cytoplasm. The enzyme catalyses tRNA(Arg) + L-arginine + ATP = L-arginyl-tRNA(Arg) + AMP + diphosphate. This Archaeoglobus fulgidus (strain ATCC 49558 / DSM 4304 / JCM 9628 / NBRC 100126 / VC-16) protein is Arginine--tRNA ligase (argS).